The primary structure comprises 275 residues: Ribosomal RNA small subunit methyltransferase A (275 aa).

S-adenosyl-L-methionine contacts are provided by Asn15, Leu17, Gly42, Glu63, Asp88, and Asn111.

This sequence belongs to the class I-like SAM-binding methyltransferase superfamily. rRNA adenine N(6)-methyltransferase family. RsmA subfamily.

The protein localises to the cytoplasm. The enzyme catalyses adenosine(1518)/adenosine(1519) in 16S rRNA + 4 S-adenosyl-L-methionine = N(6)-dimethyladenosine(1518)/N(6)-dimethyladenosine(1519) in 16S rRNA + 4 S-adenosyl-L-homocysteine + 4 H(+). Specifically dimethylates two adjacent adenosines (A1518 and A1519) in the loop of a conserved hairpin near the 3'-end of 16S rRNA in the 30S particle. May play a critical role in biogenesis of 30S subunits. This Geobacter metallireducens (strain ATCC 53774 / DSM 7210 / GS-15) protein is Ribosomal RNA small subunit methyltransferase A.